The sequence spans 261 residues: tRNA pseudouridine synthase A (261 aa).

Asp52 (nucleophile) is an active-site residue. Tyr110 contacts substrate.

It belongs to the tRNA pseudouridine synthase TruA family. In terms of assembly, homodimer.

It carries out the reaction uridine(38/39/40) in tRNA = pseudouridine(38/39/40) in tRNA. Functionally, formation of pseudouridine at positions 38, 39 and 40 in the anticodon stem and loop of transfer RNAs. This is tRNA pseudouridine synthase A from Coxiella burnetii (strain CbuK_Q154) (Coxiella burnetii (strain Q154)).